Reading from the N-terminus, the 281-residue chain is Shikimate dehydrogenase (NADP(+)) (281 aa).

Residues 15 to 17 and T62 each bind shikimate; that span reads SKS. K66 serves as the catalytic Proton acceptor. 2 residues coordinate shikimate: N87 and D102. Residues 127–131, 151–156, and L217 each bind NADP(+); these read GAGGS and NRTPER. Residue Y219 participates in shikimate binding. Position 241 (G241) interacts with NADP(+).

Belongs to the shikimate dehydrogenase family. As to quaternary structure, homodimer.

It catalyses the reaction shikimate + NADP(+) = 3-dehydroshikimate + NADPH + H(+). It functions in the pathway metabolic intermediate biosynthesis; chorismate biosynthesis; chorismate from D-erythrose 4-phosphate and phosphoenolpyruvate: step 4/7. In terms of biological role, involved in the biosynthesis of the chorismate, which leads to the biosynthesis of aromatic amino acids. Catalyzes the reversible NADPH linked reduction of 3-dehydroshikimate (DHSA) to yield shikimate (SA). In Stenotrophomonas maltophilia (strain R551-3), this protein is Shikimate dehydrogenase (NADP(+)).